Reading from the N-terminus, the 795-residue chain is TBC1 domain family member 5 (795 aa).

Residues 1–13 are compositionally biased toward basic and acidic residues; the sequence is MYHSLSETRHPLQ. The disordered stretch occupies residues 1 to 49; the sequence is MYHSLSETRHPLQPEEQEVGIDPLSSYSNKSGGDSNKNGRRTSSTLDSE. The span at 25 to 49 shows a compositional bias: polar residues; sequence SSYSNKSGGDSNKNGRRTSSTLDSE. Position 42 is a phosphothreonine (Thr42). A phosphoserine mark is found at Ser43 and Ser44. Positions 56 to 64 are required for interaction with retromer; involved in interaction with ATG8 family proteins; that stretch reads RKEWEELFV. An LIR 1 motif is present at residues 57–62; it reads KEWEEL. A Rab-GAP TBC domain is found at 81–359; sequence LRSSRFRSIC…VVWDALFADG (279 aa). Position 460 is a phosphoserine (Ser460). The segment at 475–564 is disordered; the sequence is PGSAGGPVPG…PPSSATKKDS (90 aa). A compositionally biased stretch (low complexity) spans 484–496; it reads GGNSSSSSSVVIP. Ser522, Ser539, Ser541, Ser544, Ser554, Ser570, Ser584, and Ser730 each carry phosphoserine. The span at 523 to 542 shows a compositional bias: polar residues; that stretch reads MPVQLNKGLSSKNISSSPSV. Residues 554–564 show a composition bias toward polar residues; that stretch reads SPPSSATKKDS. The tract at residues 674 to 795 is disordered; it reads HYCSSGQGQG…GFTIVSPLDI (122 aa). The span at 727-748 shows a compositional bias: polar residues; that stretch reads ARGSFSGQAQPLRTLRSTSGKS. Residues 765–776 are compositionally biased toward low complexity; the sequence is PASASSSNPSSS. The LIR 2 signature appears at 785-789; it reads SGFTI. A required for interaction with ATG8 family proteins region spans residues 786 to 791; the sequence is GFTIVS. The residue at position 791 (Ser791) is a Phosphoserine.

As to quaternary structure, interacts with MAP1LC3A, MAP1LC3B, MAP1LC3C, GABARAP, GABARAPL1, GABARAPL2. Interacts with VPS29 and VPS35; indicative for an association with retromer CSC subcomplex. MAP1LC3A and VPS29 compete for binding to TBC1D5. Interacts with AP2M1; indicative for an association with the AP2 complex. Interacts with ULK1 and ATG13 (phosphorylated); indicative for an association with the activated ULK1-ATG13-FIP200 complex. Interacts with ATG9A; the interactions seems to be restricted to the AP2-clathrin-associated fraction of ATG9A.

It localises to the endosome membrane. The protein resides in the cytoplasmic vesicle. Its subcellular location is the autophagosome. In terms of biological role, may act as a GTPase-activating protein (GAP) for Rab family protein(s). May act as a GAP for RAB7A. Can displace RAB7A and retromer CSC subcomplex from the endosomal membrane to the cytosol; at least retromer displacement seems to require its catalytic activity. Required for retrograde transport of cargo proteins from endosomes to the trans-Golgi network (TGN); the function seems to require its catalytic activity. Involved in regulation of autophagy. May act as a molecular switch between endosomal and autophagosomal transport and is involved in reprogramming vesicle trafficking upon autophagy induction. Involved in the trafficking of ATG9A upon activation of autophagy. May regulate the recruitment of ATG9A-AP2-containing vesicles to autophagic membranes. In Homo sapiens (Human), this protein is TBC1 domain family member 5 (TBC1D5).